The primary structure comprises 518 residues: Lycopene epsilon cyclase, chloroplastic (518 aa).

100 to 128 (LIVIGCGPAGMSLAAEAGKRGLSVGLIGP) is a binding site for NAD(+). 2 helical membrane passes run 435 to 455 (FFLF…RIFF) and 469 to 489 (FLGS…MFAI).

The protein belongs to the lycopene cyclase family. As to expression, expressed in leaves and roots. Detected in flower buds and lips.

It localises to the plastid. It is found in the chloroplast membrane. It carries out the reaction a carotenoid psi-end group = a carotenoid epsilon-end group. Its pathway is carotenoid biosynthesis; alpha-zeacarotene biosynthesis. It participates in carotenoid biosynthesis; delta-carotene biosynthesis. Its function is as follows. Catalyzes the single epsilon-cyclization reaction which converts lycopene to delta-carotene and neurosporene to alpha-zeacarotene. Required for lutein biosynthesis. This is Lycopene epsilon cyclase, chloroplastic from Oncidium hybrid cultivar (Orchid).